A 161-amino-acid chain; its full sequence is Protein-export protein SecB (161 aa).

It belongs to the SecB family. Homotetramer, a dimer of dimers. One homotetramer interacts with 1 SecA dimer.

It is found in the cytoplasm. Functionally, one of the proteins required for the normal export of preproteins out of the cell cytoplasm. It is a molecular chaperone that binds to a subset of precursor proteins, maintaining them in a translocation-competent state. It also specifically binds to its receptor SecA. The polypeptide is Protein-export protein SecB (Ectopseudomonas mendocina (strain ymp) (Pseudomonas mendocina)).